Consider the following 156-residue polypeptide: NADH-ubiquinone oxidoreductase 20 kDa subunit (156 aa).

4 residues coordinate [4Fe-4S] cluster: C33, C34, C98, and C128.

It belongs to the complex I 20 kDa subunit family. It depends on [4Fe-4S] cluster as a cofactor.

The protein localises to the mitochondrion. It catalyses the reaction a ubiquinone + NADH + 5 H(+)(in) = a ubiquinol + NAD(+) + 4 H(+)(out). The sequence is that of NADH-ubiquinone oxidoreductase 20 kDa subunit (NAD10) from Paramecium tetraurelia.